A 134-amino-acid polypeptide reads, in one-letter code: Crustacean hyperglycemic hormones isoform A (134 aa).

Positions 1 to 24 (MMACRTLCLVVVMVASLGTSGVGG) are cleaved as a signal peptide. Gln-61 carries the post-translational modification Pyrrolidone carboxylic acid. A D-phenylalanine; in form CHH-A-II modification is found at Phe-63. Disulfide bonds link Cys-67/Cys-103, Cys-83/Cys-99, and Cys-86/Cys-112. Valine amide is present on Val-132.

The protein belongs to the arthropod CHH/MIH/GIH/VIH hormone family. Post-translationally, stereoinversion of L-Phe (form CHH-A-I) to D-Phe (form CHH-A-II). As to expression, produced by the medulla terminalis X-organ in the eyestalks and transported to the sinus gland where they are stored and released. Present also in the ventral nervous system.

Its subcellular location is the secreted. Functionally, CHH is the most abundant hormone in the sinus gland of isopods and decapods which controls the blood sugar level. Has a secretagogue action over the amylase released from the midgut gland. May act as a stress hormone. MIH may inhibit Y-organs where molting hormone (ecdysteroid) is secreted and a molting cycle is initiated when MIH secretion diminishes or stops. This is Crustacean hyperglycemic hormones isoform A from Homarus americanus (American lobster).